A 124-amino-acid polypeptide reads, in one-letter code: Small ribosomal subunit protein uS11 (124 aa).

The protein belongs to the universal ribosomal protein uS11 family. As to quaternary structure, part of the 30S ribosomal subunit. Interacts with proteins S7 and S18. Binds to IF-3.

In terms of biological role, located on the platform of the 30S subunit, it bridges several disparate RNA helices of the 16S rRNA. Forms part of the Shine-Dalgarno cleft in the 70S ribosome. In Sulfurovum sp. (strain NBC37-1), this protein is Small ribosomal subunit protein uS11.